The chain runs to 139 residues: ATP synthase epsilon chain (139 aa).

Belongs to the ATPase epsilon chain family. As to quaternary structure, F-type ATPases have 2 components, CF(1) - the catalytic core - and CF(0) - the membrane proton channel. CF(1) has five subunits: alpha(3), beta(3), gamma(1), delta(1), epsilon(1). CF(0) has three main subunits: a, b and c.

Its subcellular location is the cell inner membrane. Its function is as follows. Produces ATP from ADP in the presence of a proton gradient across the membrane. This Salmonella typhimurium (strain LT2 / SGSC1412 / ATCC 700720) protein is ATP synthase epsilon chain.